Consider the following 433-residue polypeptide: Divergent protein kinase domain 2B (433 aa).

Residues 1-31 form the signal peptide; that stretch reads MEPQLGPEAAALRPGWLALLLWVSALSCSFS. A glycan (N-linked (GlcNAc...) asparagine) is linked at Asn100.

The protein belongs to the DIPK family.

Its subcellular location is the secreted. The polypeptide is Divergent protein kinase domain 2B (Homo sapiens (Human)).